Consider the following 202-residue polypeptide: Holliday junction branch migration complex subunit RuvA (202 aa).

Positions 1–64 (MIGRLRGSLA…EDAHLLYGFY (64 aa)) are domain I. Residues 65–143 (EKRERELFRE…AWESLPGTFT (79 aa)) are domain II. The tract at residues 144–153 (LVSNGPNQAE) is flexible linker. Residues 154–202 (PVASAESDAVSALISLGYKPQEASKAVSAIKEKDLSSADLIRRALKGMG) form a domain III region.

This sequence belongs to the RuvA family. Homotetramer. Forms an RuvA(8)-RuvB(12)-Holliday junction (HJ) complex. HJ DNA is sandwiched between 2 RuvA tetramers; dsDNA enters through RuvA and exits via RuvB. An RuvB hexamer assembles on each DNA strand where it exits the tetramer. Each RuvB hexamer is contacted by two RuvA subunits (via domain III) on 2 adjacent RuvB subunits; this complex drives branch migration. In the full resolvosome a probable DNA-RuvA(4)-RuvB(12)-RuvC(2) complex forms which resolves the HJ.

The protein resides in the cytoplasm. In terms of biological role, the RuvA-RuvB-RuvC complex processes Holliday junction (HJ) DNA during genetic recombination and DNA repair, while the RuvA-RuvB complex plays an important role in the rescue of blocked DNA replication forks via replication fork reversal (RFR). RuvA specifically binds to HJ cruciform DNA, conferring on it an open structure. The RuvB hexamer acts as an ATP-dependent pump, pulling dsDNA into and through the RuvAB complex. HJ branch migration allows RuvC to scan DNA until it finds its consensus sequence, where it cleaves and resolves the cruciform DNA. The polypeptide is Holliday junction branch migration complex subunit RuvA (Pseudomonas savastanoi pv. phaseolicola (strain 1448A / Race 6) (Pseudomonas syringae pv. phaseolicola (strain 1448A / Race 6))).